The sequence spans 142 residues: Large ribosomal subunit protein uL13 (142 aa).

Belongs to the universal ribosomal protein uL13 family. Part of the 50S ribosomal subunit.

In terms of biological role, this protein is one of the early assembly proteins of the 50S ribosomal subunit, although it is not seen to bind rRNA by itself. It is important during the early stages of 50S assembly. This is Large ribosomal subunit protein uL13 from Cronobacter sakazakii (strain ATCC BAA-894) (Enterobacter sakazakii).